A 141-amino-acid polypeptide reads, in one-letter code: VLSPADKTNVKASWEKIGGHGAAYGAEALERMFLSFPTTKTYFPHFDLSHGSAQVQGHGKKVADALANAAAHVDDLPGALSALSDLHAHKLRVDPVNFKLLSHCLLVTLAAHHPAEFTPAVHASLDKFLASVSTVLTSKYR.

The region spanning 1 to 141 (VLSPADKTNV…VSTVLTSKYR (141 aa)) is the Globin domain. Ser3 bears the Phosphoserine mark. Residue Lys7 is modified to N6-succinyllysine. Thr8 carries the post-translational modification Phosphothreonine. Lys11 is modified (N6-succinyllysine). The residue at position 16 (Lys16) is an N6-acetyllysine; alternate. Lys16 is subject to N6-succinyllysine; alternate. Tyr24 is subject to Phosphotyrosine. Ser35 bears the Phosphoserine mark. At Lys40 the chain carries N6-succinyllysine. Ser49 is subject to Phosphoserine. His58 is an O2 binding site. Residue His87 coordinates heme b. Ser102 carries the post-translational modification Phosphoserine. Thr108 carries the post-translational modification Phosphothreonine. Phosphoserine occurs at positions 124 and 131. Phosphothreonine occurs at positions 134 and 137. Residue Ser138 is modified to Phosphoserine.

This sequence belongs to the globin family. Heterotetramer of two alpha chains and two beta chains. As to expression, red blood cells.

Its function is as follows. Involved in oxygen transport from the lung to the various peripheral tissues. Hemopressin acts as an antagonist peptide of the cannabinoid receptor CNR1. Hemopressin-binding efficiently blocks cannabinoid receptor CNR1 and subsequent signaling. The chain is Hemoglobin subunit alpha (HBA) from Urocitellus parryii (Arctic ground squirrel).